Here is a 615-residue protein sequence, read N- to C-terminus: Proteasome-associated ATPase (615 aa).

The tract at residues 1–36 (MSESERPEAGDGTDALGASPDTPLSSEDAAELEQLR) is disordered. Residues 25–102 (SSEDAAELEQ…LREEVDRLGQ (78 aa)) are a coiled coil. Residue 302-307 (GCGKTL) participates in ATP binding. Positions 614–615 (YL) are docks into pockets in the proteasome alpha-ring.

Belongs to the AAA ATPase family. As to quaternary structure, homohexamer. Assembles into a hexameric ring structure that caps the 20S proteasome core. Strongly interacts with the prokaryotic ubiquitin-like protein Pup through a hydrophobic interface; the interacting region of ARC lies in its N-terminal coiled-coil domain. There is one Pup binding site per ARC hexamer ring. Upon ATP-binding, the C-terminus of ARC interacts with the alpha-rings of the proteasome core, possibly by binding to the intersubunit pockets.

It functions in the pathway protein degradation; proteasomal Pup-dependent pathway. Its function is as follows. ATPase which is responsible for recognizing, binding, unfolding and translocation of pupylated proteins into the bacterial 20S proteasome core particle. May be essential for opening the gate of the 20S proteasome via an interaction with its C-terminus, thereby allowing substrate entry and access to the site of proteolysis. Thus, the C-termini of the proteasomal ATPase may function like a 'key in a lock' to induce gate opening and therefore regulate proteolysis. The polypeptide is Proteasome-associated ATPase (Mycolicibacterium gilvum (strain PYR-GCK) (Mycobacterium gilvum (strain PYR-GCK))).